Consider the following 97-residue polypeptide: Large ribosomal subunit protein bL27 (97 aa).

Positions 1-12 (MLKMNLANLQLF) are excised as a propeptide. The tract at residues 14–38 (HKKGGGSTSNGRDSESKRLGAKAAD) is disordered.

This sequence belongs to the bacterial ribosomal protein bL27 family. Post-translationally, the N-terminus is cleaved by ribosomal processing cysteine protease Prp.

The protein is Large ribosomal subunit protein bL27 of Streptococcus mutans serotype c (strain ATCC 700610 / UA159).